Reading from the N-terminus, the 150-residue chain is Endoribonuclease YbeY (150 aa).

His115, His119, and His125 together coordinate Zn(2+).

The protein belongs to the endoribonuclease YbeY family. Zn(2+) is required as a cofactor.

It is found in the cytoplasm. Functionally, single strand-specific metallo-endoribonuclease involved in late-stage 70S ribosome quality control and in maturation of the 3' terminus of the 16S rRNA. This chain is Endoribonuclease YbeY, found in Aquifex aeolicus (strain VF5).